We begin with the raw amino-acid sequence, 1020 residues long: Calcium-transporting ATPase 10, plasma membrane-type (1020 aa).

The Cytoplasmic portion of the chain corresponds to 1 to 175; it reads MESYLEENFG…FVWEALQDTT (175 aa). The interval 21 to 32 is interaction with calmodulin; that stretch reads ALRRWRKLCGVV. 2 helical membrane passes run 176 to 196 and 199 to 219; these read LIIL…MEGW and GAHD…VTAT. Residues 220 to 263 lie on the Cytoplasmic side of the membrane; sequence SDYRQSLQFKDLDKEKKKIQVQVTRNGFRQRLSIYDLLPGDVVH. 2 helical membrane passes run 264–284 and 352–372; these read LAIG…SLLI and GVAT…FIVL. The Cytoplasmic segment spans residues 373–400; it reads SQGLISKKYHEGLLLSWSGDDALEMLEH. Residues 401–421 traverse the membrane as a helical segment; the sequence is FAIAVTIVVVAVPEGLPLAVT. The active-site 4-aspartylphosphate intermediate is the aspartate 456. Aspartate 758 and aspartate 762 together coordinate Mg(2+). Residues 843–863 traverse the membrane as a helical segment; sequence LTAVQLLWVNMIMDTLGALAL. Residues 864–887 lie on the Cytoplasmic side of the membrane; it reads ATEPPNDDLMKREPVGRTGKFITN. The next 2 helical transmembrane spans lie at 888-907 and 924-944; these read VMWR…MWYL and VVLN…NEIS. Over 945 to 961 the chain is Cytoplasmic; the sequence is SREMEKINVLRGILKNY. Helical transmembrane passes span 962–982 and 995–1015; these read VFLG…QFLG and WIAS…IKLL. The Cytoplasmic portion of the chain corresponds to 1016-1020; that stretch reads PVGSS.

This sequence belongs to the cation transport ATPase (P-type) (TC 3.A.3) family. Type IIB subfamily.

Its subcellular location is the membrane. The catalysed reaction is Ca(2+)(in) + ATP + H2O = Ca(2+)(out) + ADP + phosphate + H(+). Activated by calmodulin. Functionally, this magnesium-dependent enzyme catalyzes the hydrolysis of ATP coupled with the translocation of calcium from the cytosol out of the cell, into the endoplasmic reticulum, or into organelles. This is Calcium-transporting ATPase 10, plasma membrane-type from Oryza sativa subsp. japonica (Rice).